Here is a 1214-residue protein sequence, read N- to C-terminus: SWI/SNF complex subunit SMARCC2 (1214 aa).

Residues 1–274 (MAVRKKDGGP…PVSRRKKISA (274 aa)) form a marR-like, BRCT and chromo domains module region. The 127-residue stretch at 10–136 (PNVKYYEAAD…IEKSLVQNNC (127 aa)) folds into the MarR-like domain. The 44-residue stretch at 140 to 183 (PNIFLCPEIEPKLLGKLKDIIKRHQGTVTEDKNNASHVVYPVPG) folds into the BRCT; N-terminus domain. Residues 189–217 (EWVRPVMKRDKQVLLHWGYYPDSYDTWIP) enclose the Chromo domain. Residues 233-257 (KPRKVHAKWILDTDTFNEWMNEEDY) form the BRCT; C-terminus domain. Positions 257–413 (YEVNDDKNPV…GEQTKNPDLH (157 aa)) are disordered. Positions 275–284 (KTLTDEVNSP) are enriched in polar residues. Serine 283, serine 286, serine 302, serine 304, and serine 306 each carry phosphoserine. Lysine 312 is subject to N6-(ADP-ribosyl)lysine. Lysine 326 carries the post-translational modification N6-acetyllysine. Over residues 331-344 (HREEEQEDLTKDMD) the composition is skewed to basic and acidic residues. Serine 347 and serine 387 each carry phosphoserine. The segment covering 379-398 (DLDEQEDESMETTGKDEDEN) has biased composition (acidic residues). The 98-residue stretch at 424–521 (IIIPSYAAWF…YQVDAESRPT (98 aa)) folds into the SWIRM domain. Threonine 548 carries the post-translational modification Phosphothreonine. Residues lysine 564, lysine 566, lysine 568, and lysine 592 each participate in a glycyl lysine isopeptide (Lys-Gly) (interchain with G-Cter in SUMO2) cross-link. The 52-residue stretch at 596-647 (SATREWTEQETLLLLEALEMYKDDWNKVSEHVGSRTQDECILHFLRLPIEDP) folds into the SANT domain. Residue lysine 704 forms a Glycyl lysine isopeptide (Lys-Gly) (interchain with G-Cter in SUMO2) linkage. Positions 724–852 (KVTGKADPAF…GERKTKVERD (129 aa)) are disordered. 2 stretches are compositionally biased toward basic and acidic residues: residues 747–777 (EPER…EPRE) and 784–852 (EEAK…VERD). Lysine 787 participates in a covalent cross-link: Glycyl lysine isopeptide (Lys-Gly) (interchain with G-Cter in SUMO2). The residue at position 813 (serine 813) is a Phosphoserine. Lysine 848 participates in a covalent cross-link: Glycyl lysine isopeptide (Lys-Gly) (interchain with G-Cter in SUMO2). A coiled-coil region spans residues 907–934 (EELETIMDREREALEYQRQQLLADRQAF). Disordered regions lie at residues 947 to 983 (RQQH…PPAV), 997 to 1092 (PAGS…PPPP), and 1182 to 1214 (LPSA…PPPQ). Over residues 949 to 959 (QHFQQMHQQQQ) the composition is skewed to low complexity. Pro residues predominate over residues 960–974 (QPPPALPPGSQPIPP). Residues 997 to 1033 (PAGSGAPPGSLGPSEQIGQAGSTAGPQQQQPAGAPQP) show a composition bias toward low complexity. Pro residues-rich tracts occupy residues 1034–1051 (GAVP…PSPF) and 1186–1202 (SPLP…PTAP).

Belongs to the SMARCC family. As to quaternary structure, component of the multiprotein chromatin-remodeling complexes SWI/SNF: SWI/SNF-A (BAF), SWI/SNF-B (PBAF) and related complexes. The canonical complex contains a catalytic subunit (either SMARCA4/BRG1/BAF190A or SMARCA2/BRM/BAF190B) and at least SMARCE1, ACTL6A/BAF53, SMARCC1/BAF155, SMARCC2/BAF170, and SMARCB1/SNF5/BAF47. Other subunits specific to each of the complexes may also be present permitting several possible combinations developmentally and tissue specific. Component of the BAF complex, which includes at least actin (ACTB), ARID1A/BAF250A, ARID1B/BAF250B, SMARCA2/BRM, SMARCA4/BRG1, ACTL6A/BAF53, ACTL6B/BAF53B, SMARCE1/BAF57, SMARCC1/BAF155, SMARCC2/BAF170, SMARCB1/SNF5/INI1, and one or more SMARCD1/BAF60A, SMARCD2/BAF60B, or SMARCD3/BAF60C. In muscle cells, the BAF complex also contains DPF3. Component of neural progenitors-specific chromatin remodeling complex (npBAF complex) composed of at least, ARID1A/BAF250A or ARID1B/BAF250B, SMARCD1/BAF60A, SMARCD3/BAF60C, SMARCA2/BRM/BAF190B, SMARCA4/BRG1/BAF190A, SMARCB1/BAF47, SMARCC1/BAF155, SMARCE1/BAF57, SMARCC2/BAF170, PHF10/BAF45A, ACTL6A/BAF53A and actin. Component of neuron-specific chromatin remodeling complex (nBAF complex) composed of at least, ARID1A/BAF250A or ARID1B/BAF250B, SMARCD1/BAF60A, SMARCD3/BAF60C, SMARCA2/BRM/BAF190B, SMARCA4/BRG1/BAF190A, SMARCB1/BAF47, SMARCC1/BAF155, SMARCE1/BAF57, SMARCC2/BAF170, DPF1/BAF45B, DPF3/BAF45C, ACTL6B/BAF53B and actin. Component of the SWI/SNF-B (PBAF) chromatin remodeling complex, at least composed of SMARCA4/BRG1, SMARCB1/BAF47/SNF5, ACTL6A/BAF53A or ACTL6B/BAF53B, SMARCE1/BAF57, SMARCD1/BAF60A, SMARCD2/BAF60B, perhaps SMARCD3/BAF60C, SMARCC1/BAF155, SMARCC2/BAF170, PBRM1/BAF180, ARID2/BAF200 and actin. May also interact with the SIN3A histone deacetylase transcription repressor complex in conjunction with SMARCA2 and SMARCA4. Interacts with SMARD1. Interacts with KDM6B. Interaction with RCOR1. Interacts with DPF2. Interacts with ERCC6. Interacts with FOS. Post-translationally, mono-ADP-ribosylation at Lys-312 by SIRT6 promotes recruitment to the enhancer region of the Heme oxygenase-1 (HO-1) locus, leading to transcription activation of the locus. In terms of tissue distribution, ubiquitously expressed.

Its subcellular location is the nucleus. In terms of biological role, involved in transcriptional activation and repression of select genes by chromatin remodeling (alteration of DNA-nucleosome topology). Component of SWI/SNF chromatin remodeling complexes that carry out key enzymatic activities, changing chromatin structure by altering DNA-histone contacts within a nucleosome in an ATP-dependent manner. Can stimulate the ATPase activity of the catalytic subunit of these complexes. May be required for CoREST dependent repression of neuronal specific gene promoters in non-neuronal cells. Belongs to the neural progenitors-specific chromatin remodeling complex (npBAF complex) and the neuron-specific chromatin remodeling complex (nBAF complex). During neural development a switch from a stem/progenitor to a postmitotic chromatin remodeling mechanism occurs as neurons exit the cell cycle and become committed to their adult state. The transition from proliferating neural stem/progenitor cells to postmitotic neurons requires a switch in subunit composition of the npBAF and nBAF complexes. As neural progenitors exit mitosis and differentiate into neurons, npBAF complexes which contain ACTL6A/BAF53A and PHF10/BAF45A, are exchanged for homologous alternative ACTL6B/BAF53B and DPF1/BAF45B or DPF3/BAF45C subunits in neuron-specific complexes (nBAF). The npBAF complex is essential for the self-renewal/proliferative capacity of the multipotent neural stem cells. The nBAF complex along with CREST plays a role regulating the activity of genes essential for dendrite growth. Critical regulator of myeloid differentiation, controlling granulocytopoiesis and the expression of genes involved in neutrophil granule formation. This chain is SWI/SNF complex subunit SMARCC2 (SMARCC2), found in Homo sapiens (Human).